Here is a 1085-residue protein sequence, read N- to C-terminus: Carbamoyl phosphate synthase large chain (1085 aa).

The interval 1–399 (MPKRTDISNI…ALQKALCSLE (399 aa)) is carboxyphosphate synthetic domain. ATP-binding residues include arginine 127, arginine 167, glycine 174, glutamate 206, leucine 208, glutamate 213, glycine 239, valine 240, histidine 241, glutamine 283, and glutamate 297. The region spanning 131 to 326 (KEAMLKIGMD…IAKVATMLAV (196 aa)) is the ATP-grasp 1 domain. Mg(2+) contacts are provided by glutamine 283, glutamate 297, and asparagine 299. Residues glutamine 283, glutamate 297, and asparagine 299 each contribute to the Mn(2+) site. Positions 400–552 (NNWLGFESLS…APNPLPPIEN (153 aa)) are oligomerization domain. The tract at residues 553–951 (KQEKKEKKIL…AFFKAQTACF (399 aa)) is carbamoyl phosphate synthetic domain. The ATP-grasp 2 domain occupies 678-871 (SLFLKELDIK…LAKVATRVMV (194 aa)). ATP contacts are provided by arginine 714, lysine 756, leucine 758, glutamate 763, glycine 788, isoleucine 789, histidine 790, serine 791, glutamine 830, and glutamate 842. Mg(2+) is bound by residues glutamine 830, glutamate 842, and asparagine 844. 3 residues coordinate Mn(2+): glutamine 830, glutamate 842, and asparagine 844. The MGS-like domain maps to 952–1085 (NPIKNKGLIF…ELLALQDYLK (134 aa)). The interval 952-1085 (NPIKNKGLIF…ELLALQDYLK (134 aa)) is allosteric domain.

The protein belongs to the CarB family. In terms of assembly, composed of two chains; the small (or glutamine) chain promotes the hydrolysis of glutamine to ammonia, which is used by the large (or ammonia) chain to synthesize carbamoyl phosphate. Tetramer of heterodimers (alpha,beta)4. Mg(2+) serves as cofactor. It depends on Mn(2+) as a cofactor.

It carries out the reaction hydrogencarbonate + L-glutamine + 2 ATP + H2O = carbamoyl phosphate + L-glutamate + 2 ADP + phosphate + 2 H(+). The enzyme catalyses hydrogencarbonate + NH4(+) + 2 ATP = carbamoyl phosphate + 2 ADP + phosphate + 2 H(+). Its pathway is amino-acid biosynthesis; L-arginine biosynthesis; carbamoyl phosphate from bicarbonate: step 1/1. It functions in the pathway pyrimidine metabolism; UMP biosynthesis via de novo pathway; (S)-dihydroorotate from bicarbonate: step 1/3. Its function is as follows. Large subunit of the glutamine-dependent carbamoyl phosphate synthetase (CPSase). CPSase catalyzes the formation of carbamoyl phosphate from the ammonia moiety of glutamine, carbonate, and phosphate donated by ATP, constituting the first step of 2 biosynthetic pathways, one leading to arginine and/or urea and the other to pyrimidine nucleotides. The large subunit (synthetase) binds the substrates ammonia (free or transferred from glutamine from the small subunit), hydrogencarbonate and ATP and carries out an ATP-coupled ligase reaction, activating hydrogencarbonate by forming carboxy phosphate which reacts with ammonia to form carbamoyl phosphate. The protein is Carbamoyl phosphate synthase large chain of Helicobacter pylori (strain ATCC 700392 / 26695) (Campylobacter pylori).